We begin with the raw amino-acid sequence, 514 residues long: ATP synthase subunit alpha (514 aa).

170-177 is an ATP binding site; it reads GDRQIGKS.

It belongs to the ATPase alpha/beta chains family. In terms of assembly, F-type ATPases have 2 components, CF(1) - the catalytic core - and CF(0) - the membrane proton channel. CF(1) has five subunits: alpha(3), beta(3), gamma(1), delta(1), epsilon(1). CF(0) has three main subunits: a(1), b(2) and c(9-12). The alpha and beta chains form an alternating ring which encloses part of the gamma chain. CF(1) is attached to CF(0) by a central stalk formed by the gamma and epsilon chains, while a peripheral stalk is formed by the delta and b chains.

It is found in the cell inner membrane. It catalyses the reaction ATP + H2O + 4 H(+)(in) = ADP + phosphate + 5 H(+)(out). In terms of biological role, produces ATP from ADP in the presence of a proton gradient across the membrane. The alpha chain is a regulatory subunit. The polypeptide is ATP synthase subunit alpha (Chromohalobacter salexigens (strain ATCC BAA-138 / DSM 3043 / CIP 106854 / NCIMB 13768 / 1H11)).